Consider the following 507-residue polypeptide: Histidine ammonia-lyase (507 aa).

The 5-imidazolinone (Ala-Gly) cross-link spans 141 to 143; that stretch reads ASG. At S142 the chain carries 2,3-didehydroalanine (Ser).

This sequence belongs to the PAL/histidase family. In terms of processing, contains an active site 4-methylidene-imidazol-5-one (MIO), which is formed autocatalytically by cyclization and dehydration of residues Ala-Ser-Gly.

The protein localises to the cytoplasm. It catalyses the reaction L-histidine = trans-urocanate + NH4(+). Its pathway is amino-acid degradation; L-histidine degradation into L-glutamate; N-formimidoyl-L-glutamate from L-histidine: step 1/3. This chain is Histidine ammonia-lyase, found in Burkholderia pseudomallei (strain 668).